A 530-amino-acid polypeptide reads, in one-letter code: MEIKNSPSSLTSPASYNCSQSILPLEHGPIYIPSSYVESRHEYSAMTFYSPAVMNYSVPSSTGNLEGGPVRQTASPNVLWPTSGHLSPLATHCQSSLLYAEPQKSPWCEARSLEHTLPVNRETLKRKLGGSGCASPVTSPSAKRDAHFCAVCSDYASGYHYGVWSCEGCKAFFKRSIQGHNDYICPATNQCTIDKNRRKSCQACRLRKCYEVGMVKCGSRRERCGYRIVRRQRSASEQVHCLNKAKRTSGHTPRVKELLLNSLSPEQLVLTLLEAEPPNVLVSRPSMPFTEASMMMSLTKLADKELVHMIGWAKKIPGFVELSLLDQVRLLESCWMEVLMVGLMWRSIDHPGKLIFAPDLVLDRDEGKCVEGILEIFDMLLATTARFRELKLQHKEYLCVKAMILLNSSMYPLATASQEAESSRKLTHLLNAVTDALVWVISKSGISSQQQSVRLANLLMLLSHVRHISNKGMEHLLSMKCKNVVPVYDLLLEMLNAHTLRGYKSSISGSECCSTEDSKSKEGSQNLQSQ.

Residues 1-148 form a modulating region; the sequence is MEIKNSPSSL…SPSAKRDAHF (148 aa). A Phosphoserine; alternate modification is found at Ser-61. An O-linked (GlcNAc) serine; alternate glycan is attached at Ser-61. Residues Ser-87 and Ser-105 each carry the phosphoserine; by MAPK modification. NR C4-type zinc fingers lie at residues 149 to 169 and 185 to 209; these read CAVC…CEGC and CPAT…LRKC. The segment at residues 149–214 is a DNA-binding region (nuclear receptor); that stretch reads CAVCSDYASG…RLRKCYEVGM (66 aa). One can recognise an NR LBD domain in the interval 264–498; it reads SPEQLVLTLL…DLLLEMLNAH (235 aa). Over residues 506 to 515 the composition is skewed to polar residues; the sequence is SISGSECCST. The interval 506–530 is disordered; it reads SISGSECCSTEDSKSKEGSQNLQSQ.

It belongs to the nuclear hormone receptor family. NR3 subfamily. As to quaternary structure, binds DNA as a homodimer. Can form a heterodimer with ESR1. Interacts with NCOA1, NCOA3, NCOA5 and NCOA6 coactivators, leading to a strong increase of transcription of target genes. Interacts with UBE1C and AKAP13. Interacts with DNTTIP2. Interacts with CCDC62 in the presence of estradiol/E2; this interaction seems to enhance the transcription of target genes. Interacts with DNAAF4. Interacts with PRMT2. Interacts with CCAR2 (via N-terminus) in a ligand-independent manner. Interacts with RBM39, in the presence of estradiol (E2). Interacts with STUB1/CHIP. In terms of processing, phosphorylation at Ser-87 and Ser-105 recruits NCOA1. As to expression, expressed in prostate, ovary, Leydig cells and in epithelium of the efferent ductules and of the initial segment of the epididymis.

The protein resides in the nucleus. Its function is as follows. Nuclear hormone receptor. Binds estrogens with an affinity similar to that of ESR1/ER-alpha, and activates expression of reporter genes containing estrogen response elements (ERE) in an estrogen-dependent manner. The chain is Estrogen receptor beta (Esr2) from Mus musculus (Mouse).